The primary structure comprises 317 residues: Ribonuclease Z (317 aa).

The Zn(2+) site is built by His63, His65, Asp67, His68, His143, Asp213, and His273. Asp67 serves as the catalytic Proton acceptor.

It belongs to the RNase Z family. As to quaternary structure, homodimer. Requires Zn(2+) as cofactor.

The enzyme catalyses Endonucleolytic cleavage of RNA, removing extra 3' nucleotides from tRNA precursor, generating 3' termini of tRNAs. A 3'-hydroxy group is left at the tRNA terminus and a 5'-phosphoryl group is left at the trailer molecule.. Its function is as follows. Zinc phosphodiesterase, which displays some tRNA 3'-processing endonuclease activity. Probably involved in tRNA maturation, by removing a 3'-trailer from precursor tRNA. The chain is Ribonuclease Z from Methanocaldococcus jannaschii (strain ATCC 43067 / DSM 2661 / JAL-1 / JCM 10045 / NBRC 100440) (Methanococcus jannaschii).